A 307-amino-acid chain; its full sequence is Streptomycin 6-kinase (307 aa).

A streptomycin-binding site is contributed by 133–145 (LAGLLNRLHSVPA). Aspartate 201 (proton acceptor) is an active-site residue.

This sequence belongs to the aminoglycoside phosphotransferase family.

The enzyme catalyses streptomycin + ATP = streptomycin 6-phosphate + ADP + H(+). Its function is as follows. The aminoglycoside phosphotransferases achieve inactivation of their antibiotic substrates by phosphorylation. This Streptomyces griseus protein is Streptomycin 6-kinase (aphD).